The sequence spans 288 residues: ATP synthase gamma chain (288 aa).

The protein belongs to the ATPase gamma chain family. As to quaternary structure, F-type ATPases have 2 components, CF(1) - the catalytic core - and CF(0) - the membrane proton channel. CF(1) has five subunits: alpha(3), beta(3), gamma(1), delta(1), epsilon(1). CF(0) has three main subunits: a, b and c.

It is found in the cell inner membrane. Produces ATP from ADP in the presence of a proton gradient across the membrane. The gamma chain is believed to be important in regulating ATPase activity and the flow of protons through the CF(0) complex. The polypeptide is ATP synthase gamma chain (Rickettsia prowazekii (strain Madrid E)).